Here is a 103-residue protein sequence, read N- to C-terminus: N(4)-acetylcytidine amidohydrolase (103 aa).

In terms of domain architecture, ASCH spans 6-101; the sequence is ITFFQRFQDD…QTQFYVIEFK (96 aa). Residue lysine 21 is the Proton acceptor of the active site. Residue threonine 24 is the Nucleophile of the active site. The Proton donor role is filled by glutamate 74.

It belongs to the N(4)-acetylcytidine amidohydrolase family.

The enzyme catalyses N(4)-acetylcytidine + H2O = cytidine + acetate + H(+). It carries out the reaction N(4)-acetyl-2'-deoxycytidine + H2O = 2'-deoxycytidine + acetate + H(+). The catalysed reaction is N(4)-acetylcytosine + H2O = cytosine + acetate + H(+). In terms of biological role, catalyzes the hydrolysis of N(4)-acetylcytidine (ac4C). The polypeptide is N(4)-acetylcytidine amidohydrolase (yqfB) (Escherichia coli O81 (strain ED1a)).